Here is a 383-residue protein sequence, read N- to C-terminus: Succinyl-diaminopimelate desuccinylase (383 aa).

His72 lines the Zn(2+) pocket. The active site involves Asp74. Asp105 lines the Zn(2+) pocket. The Proton acceptor role is filled by Glu139. The Zn(2+) site is built by Glu140, Glu168, and His356.

The protein belongs to the peptidase M20A family. DapE subfamily. In terms of assembly, homodimer. Zn(2+) serves as cofactor. Co(2+) is required as a cofactor.

The enzyme catalyses N-succinyl-(2S,6S)-2,6-diaminopimelate + H2O = (2S,6S)-2,6-diaminopimelate + succinate. Its pathway is amino-acid biosynthesis; L-lysine biosynthesis via DAP pathway; LL-2,6-diaminopimelate from (S)-tetrahydrodipicolinate (succinylase route): step 3/3. Its function is as follows. Catalyzes the hydrolysis of N-succinyl-L,L-diaminopimelic acid (SDAP), forming succinate and LL-2,6-diaminopimelate (DAP), an intermediate involved in the bacterial biosynthesis of lysine and meso-diaminopimelic acid, an essential component of bacterial cell walls. This is Succinyl-diaminopimelate desuccinylase from Beijerinckia indica subsp. indica (strain ATCC 9039 / DSM 1715 / NCIMB 8712).